A 917-amino-acid polypeptide reads, in one-letter code: MLX-interacting protein (917 aa).

The disordered stretch occupies residues 1–72 (MAADVFMCSP…AGPGREEPPR (72 aa)). The residue at position 2 (Ala-2) is an N-acetylalanine. Ser-9, Ser-33, and Ser-39 each carry phosphoserine. The span at 27–37 (PEDDDDSDTDE) shows a compositional bias: acidic residues. Over residues 47-57 (ATSARAHASAA) the composition is skewed to low complexity. A required for cytoplasmic localization region spans residues 73 to 327 (RQQIIHSGHF…PLQPNLDFMD (255 aa)). The segment at 322–445 (NLDFMDTFEP…LLSPGPAPAP (124 aa)) is transactivation domain. Disordered regions lie at residues 347–402 (LPPP…CERT) and 632–711 (SHST…TDPK). Residues 378–388 (LPNSLITSSAA) are compositionally biased toward polar residues. Low complexity predominate over residues 632–643 (SHSTSSQPSPVS). At Ser-667 the chain carries Phosphoserine. Residues 670 to 685 (VPATGSSRDCPNSGQA) show a composition bias toward polar residues. Positions 686 to 704 (SPCPSEQSPSPQSPQNNCS) are enriched in low complexity. A bHLH domain is found at 717–767 (KNRQKHISAEQKRRFNIRMGFNTLNSLISNNSKQTSHAITLQKTMEYITKL). Residues 767–788 (LQQERMQMQEEARRLREEIEEL) form a leucine-zipper region. A mediates heterotypic interactions between MLXIP and MLX and is required for cytoplasmic localization region spans residues 830–879 (WKFWIFSMIIKPLFESFKGMVSTSSLEEFHRTALSWLDQHCSLPVLRPMV). The segment at 897–917 (SQLPEQASEAVTRMGKRSGES) is disordered.

Efficient DNA binding requires dimerization with another bHLH protein. Binds DNA as a homodimer or a heterodimer with MLX/TCFL4.

The protein localises to the cytoplasm. It localises to the nucleus. Its subcellular location is the mitochondrion outer membrane. In terms of biological role, binds DNA as a heterodimer with MLX/TCFL4 and activates transcription. Binds to the canonical E box sequence 5'-CACGTG-3'. Plays a role in transcriptional activation of glycolytic target genes. Involved in glucose-responsive gene regulation. Regulates transcription in response to changes in cellular carbohydrate abundance such as occurs during fasting to feeding metabolic transition. Refeeding stimulates MLXIPL/ChREBP transcription factor, leading to increased BCKDK to PPM1K expression ratio, phosphorylation and activation of ACLY that ultimately results in the generation of malonyl-CoA and oxaloacetate immediate substrates of de novo lipogenesis and gluconeogenesis, respectively. This Mus musculus (Mouse) protein is MLX-interacting protein.